A 1170-amino-acid chain; its full sequence is Glucose transport transcription regulator RGT1 (1170 aa).

The span at 1 to 22 (MNELNTVSTNSSDSTKNGGTSN) shows a compositional bias: polar residues. The tract at residues 1–46 (MNELNTVSTNSSDSTKNGGTSNSPDDMDSAAAASHAIKKRTKASRA) is disordered. Residues 47–76 (CDQCRKKKIKCDYKDEKGVCSNCQRNGDRC) constitute a DNA-binding region (zn(2)-C6 fungal-type). The interval 77 to 148 (SFDRVPLKRG…VPSTPSRSNS (72 aa)) is disordered. Over residues 99-108 (RTNEIQDHNN) the composition is skewed to basic and acidic residues. The segment covering 113 to 138 (NTFDNSNNTLNNNTGNSGDNGINSNT) has biased composition (low complexity). A compositionally biased stretch (polar residues) spans 139 to 148 (VPSTPSRSNS). 4 positions are modified to phosphoserine: Ser-202, Ser-205, Ser-208, and Ser-229. Positions 217 to 234 (PNEQLSYNTVQQSPITNK) are enriched in polar residues. Disordered stretches follow at residues 217–254 (PNEQLSYNTVQQSPITNKHTNDSGNANGSVTGSGSASG), 269–288 (APTDDHNGEQTRRSSSIPSL), 293–343 (SNSL…PSIS), 384–506 (AQQT…HPMT), 725–757 (DEEANTGNGNTKTSEFEIGSESAGHMNPSNSPN), and 946–974 (RPPNPPANNPTVQEGPSAMGSSPVAGNLN). Over residues 239–250 (SGNANGSVTGSG) the composition is skewed to low complexity. The span at 271-280 (TDDHNGEQTR) shows a compositional bias: basic and acidic residues. Ser-283 and Ser-284 each carry phosphoserine. Low complexity-rich tracts occupy residues 293–302 (SNSLLLGGQP), 309–341 (QQSQPQAHQQKLQQGQNPYSYSQFSQQQPYNPS), and 385–397 (QQTQRPQGQQVPQ). Residues Ser-410 and Ser-414 each carry the phosphoserine modification. Residues 411–422 (APVSVTLSTDRL) show a composition bias toward polar residues. Positions 424 to 444 (GNENNNGEINNNNGSNNSGSS) are enriched in low complexity. Positions 445–457 (KDTSQHSQESVTT) are enriched in polar residues. Positions 473 to 488 (STKKRRKSYVSKKTKP) are enriched in basic residues. Over residues 493–506 (SISITSKDSAHPMT) the composition is skewed to polar residues. The residue at position 1130 (Ser-1130) is a Phosphoserine.

Belongs to the EDS1/RGT1 family. In terms of processing, glucose-induced phosphorylation regulates the DNA-binding activity. Hyperphosphorylation in cells growing on high levels of glucose does prevents DNA-binding and dephosphorylation restores DNA-binding ability.

The protein resides in the nucleus. It is found in the cytoplasm. Glucose-responsive transcription factor that regulates expression of several glucose transporter (HXT) genes in response to glucose. In the absence of glucose, it functions as a transcriptional repressor, whereas high concentrations of glucose cause it to function as a transcriptional activator. In cells growing on low levels of glucose, has a neutral role, neither repressing nor activating transcription. Binds the consensus binding site sequence 5'-CGGANNA-3', of which multiple copies are present in all HXT promoters regulated by RGT1. The chain is Glucose transport transcription regulator RGT1 (RGT1) from Saccharomyces cerevisiae (strain YJM789) (Baker's yeast).